Here is a 230-residue protein sequence, read N- to C-terminus: MNKLVKKVYGVGVGVGDKKLLTLKALEVLKKVDKIFVPVSKKGKKSIAYEIIKDYVDGKNIEELLFPMIKDKERLKKYWENALEKVLKEDGEVAIITIGDPTLYSTFSYVWKLLKERGVEVEIVNGISSIFASAAALNIPLVEGDEKLCILPQGKDLEKYIDEFDTIIIMKTKNLNEKLSVIKNRDDYIIGLVKRATFEDEKVVIGKLDEINFDEFNDYLSLAIIKRFKR.

It belongs to the precorrin methyltransferase family.

It catalyses the reaction Co-precorrin-2 + S-adenosyl-L-methionine = Co-precorrin-3 + S-adenosyl-L-homocysteine + H(+). It participates in cofactor biosynthesis; adenosylcobalamin biosynthesis; cob(II)yrinate a,c-diamide from sirohydrochlorin (anaerobic route): step 2/10. Functionally, methylates cobalt-precorrin-2 at the C-20 position to produce cobalt-precorrin-3A in the anaerobic cobalamin biosynthesis pathway. The protein is Probable cobalt-precorrin-2 C(20)-methyltransferase (cbiL) of Methanocaldococcus jannaschii (strain ATCC 43067 / DSM 2661 / JAL-1 / JCM 10045 / NBRC 100440) (Methanococcus jannaschii).